The sequence spans 531 residues: UDP-glucuronosyltransferase 1A7 (531 aa).

Residues 1–25 (MAPADVPASLPLGLCLLLASGFGHA) form the signal peptide. N-linked (GlcNAc...) asparagine glycosylation is found at Asn71, Asn293, and Asn431. The helical transmembrane segment at 487–503 (LDVIGFLLAIVLTVVFI) threads the bilayer.

It belongs to the UDP-glycosyltransferase family. In terms of assembly, homodimer. Homooligomer. Interacts with UGT1A1, UGT1A3, UGT1A4, UGT1A6, UGT1A8, UGT1A9 and UGT1A10 to form heterodimers.

Its subcellular location is the endoplasmic reticulum membrane. It catalyses the reaction glucuronate acceptor + UDP-alpha-D-glucuronate = acceptor beta-D-glucuronoside + UDP + H(+). The enzyme catalyses 17alpha-estradiol + UDP-alpha-D-glucuronate = 17alpha-estradiol 3-O-(beta-D-glucuronate) + UDP + H(+). The catalysed reaction is prunetin + UDP-alpha-D-glucuronate = prunetin-5-O-beta-D-glucuronide + UDP. It carries out the reaction 5-epi-5-F2t-IsoP + UDP-alpha-D-glucuronate = 5-epi-5-F2t-IsoP-glucuronide + UDP + H(+). It catalyses the reaction (E)-ferulate + UDP-alpha-D-glucuronate = (E)-ferulic acid beta-D-glucuronate ester + UDP. The enzyme catalyses candesartan + UDP-alpha-D-glucuronate = candesartan O-beta-D-glucuronoside + UDP. The catalysed reaction is SN-38 + UDP-alpha-D-glucuronate = SN-38 O-beta-D-glucuronide + UDP + H(+). It carries out the reaction mycophenolate + UDP-alpha-D-glucuronate = mycophenolate 7-O-beta-D-glucuronide + UDP + H(+). Functionally, UDP-glucuronosyltransferase (UGT) that catalyzes phase II biotransformation reactions in which lipophilic substrates are conjugated with glucuronic acid to increase the metabolite's water solubility, thereby facilitating excretion into either the urine or bile. Essential for the elimination and detoxification of drugs, xenobiotics and endogenous compounds. Catalyzes the glucuronidation of endogenous estrogen hormone epiestradiol. Involved in the glucuronidation of F2-isoprostane (5-epi-5-F2t-IsoP). Involved in the glucuronidation of the phytochemical ferulic acid at the carboxylic acid group. Also catalyzes the glucuronidation of the isoflavones genistein, daidzein, glycitein, formononetin, biochanin A and prunetin, which are phytoestrogens with anticancer and cardiovascular properties. Involved in the glucuronidation of the AGTR1 angiotensin receptor antagonist caderastan, a drug which can inhibit the effect of angiotensin II. Involved in the biotransformation of 7-ethyl-10-hydroxycamptothecin (SN-38), the pharmacologically active metabolite of the anticancer drug irinotecan. Also metabolizes mycophenolate, an immunosuppressive agent. The polypeptide is UDP-glucuronosyltransferase 1A7 (Rattus norvegicus (Rat)).